The primary structure comprises 154 residues: Ribonuclease K6 (154 aa).

The signal sequence occupies residues 1-27; that stretch reads MGPHLLGRSSLLLLLLGMWWSVRPLCA. His42 (proton acceptor) is an active-site residue. Intrachain disulfides connect Cys50/Cys108, Cys64/Cys118, Cys82/Cys133, and Cys89/Cys96. Asn59 is a glycosylation site (N-linked (GlcNAc...) asparagine). Substrate is bound by residues 65 to 69 and Lys90; that span reads KPENT. A glycan (N-linked (GlcNAc...) asparagine) is linked at Asn104. The Proton donor role is filled by His149.

It belongs to the pancreatic ribonuclease family. In terms of assembly, interacts (via N-terminus) with bacterial lipopolysaccharide (LPS). In terms of tissue distribution, kidney (at protein level).

The protein localises to the secreted. The protein resides in the lysosome. Its subcellular location is the cytoplasmic granule. Ribonuclease which shows a preference for the pyrimidines uridine and cytosine. Has potent antimicrobial activity against a range of Gram-positive and Gram-negative bacteria, including P.aeruginosa, A.baumanii, M.luteus, S.aureus, E.faecalis, E.faecium, S.saprophyticus and E.coli. Causes loss of bacterial membrane integrity, and also promotes agglutination of Gram-negative bacteria. Probably contributes to urinary tract sterility. Bactericidal activity is independent of RNase activity. In Bos taurus (Bovine), this protein is Ribonuclease K6 (RNASE6).